We begin with the raw amino-acid sequence, 302 residues long: tRNA dimethylallyltransferase (302 aa).

Residue 21 to 28 (GPTASGKS) coordinates ATP. 23–28 (TASGKS) contributes to the substrate binding site.

It belongs to the IPP transferase family. In terms of assembly, monomer. The cofactor is Mg(2+).

It catalyses the reaction adenosine(37) in tRNA + dimethylallyl diphosphate = N(6)-dimethylallyladenosine(37) in tRNA + diphosphate. Functionally, catalyzes the transfer of a dimethylallyl group onto the adenine at position 37 in tRNAs that read codons beginning with uridine, leading to the formation of N6-(dimethylallyl)adenosine (i(6)A). The sequence is that of tRNA dimethylallyltransferase from Paracoccus denitrificans (strain Pd 1222).